The following is a 101-amino-acid chain: MVSLLCCGPKLAACGIVLSVWGVIMLVLLGVFFNVHSAVLIEDVPFTEADMFEDPNPPAKMYRLYEQVSYNCFIAAAIYIVLGGFSFCQVRLNKRKEYMVR.

The next 2 membrane-spanning stretches (helical) occupy residues 13 to 33 (ACGI…GVFF) and 68 to 88 (VSYN…FSFC).

Belongs to the RNase K family.

It is found in the membrane. In terms of biological role, endoribonuclease which preferentially cleaves ApU and ApG phosphodiester bonds. This is Ribonuclease kappa-B (rnasek-b) from Xenopus laevis (African clawed frog).